A 64-amino-acid chain; its full sequence is Large ribosomal subunit protein bL33 (64 aa).

This sequence belongs to the bacterial ribosomal protein bL33 family.

This chain is Large ribosomal subunit protein bL33, found in Nostoc punctiforme (strain ATCC 29133 / PCC 73102).